A 153-amino-acid polypeptide reads, in one-letter code: D-aminoacyl-tRNA deacylase (153 aa).

The Gly-cisPro motif, important for rejection of L-amino acids motif lies at 137 to 138 (GP).

The protein belongs to the DTD family. Homodimer.

Its subcellular location is the cytoplasm. It carries out the reaction glycyl-tRNA(Ala) + H2O = tRNA(Ala) + glycine + H(+). The catalysed reaction is a D-aminoacyl-tRNA + H2O = a tRNA + a D-alpha-amino acid + H(+). Functionally, an aminoacyl-tRNA editing enzyme that deacylates mischarged D-aminoacyl-tRNAs. Also deacylates mischarged glycyl-tRNA(Ala), protecting cells against glycine mischarging by AlaRS. Acts via tRNA-based rather than protein-based catalysis; rejects L-amino acids rather than detecting D-amino acids in the active site. By recycling D-aminoacyl-tRNA to D-amino acids and free tRNA molecules, this enzyme counteracts the toxicity associated with the formation of D-aminoacyl-tRNA entities in vivo and helps enforce protein L-homochirality. In Herpetosiphon aurantiacus (strain ATCC 23779 / DSM 785 / 114-95), this protein is D-aminoacyl-tRNA deacylase.